A 409-amino-acid polypeptide reads, in one-letter code: uncharacterized protein (409 aa).

10 helical membrane passes run 18-38 (ALSA…ADVV), 47-67 (GPLL…TGVG), 100-120 (VVTV…ALVI), 159-179 (VGAM…GNAY), 180-200 (APAL…LLWL), 232-252 (FWLY…FGLL), 260-280 (GVLA…ADAL), 302-322 (ILSI…VVIG), 355-375 (GVFA…IGWL), and 380-400 (IGTL…MMFA).

The protein resides in the cell membrane. This is an uncharacterized protein from Mycobacterium tuberculosis (strain CDC 1551 / Oshkosh).